A 201-amino-acid chain; its full sequence is MIFSIEDDAPIVRDLLPDWRARFGEAGGRLELEIGCGHGGFALGFARAFPERALVGIEQRRKFAAELAAKGARHGLSNLLVLNGDARLLAPRLFAAGSLAAIHVHFPDPWWKRRHHRRRLVDDRMSALLLGLLAPGGVLDFRTDVERYAREAVVRLEEVGFRNAAGPGRFAEAAPDEIPSTRERRYLASGEPVWRLRLVKA.

Positions 33, 58, 85, and 108 each coordinate S-adenosyl-L-methionine. The active site involves Asp-108. Substrate contacts are provided by Lys-112 and Asp-144.

It belongs to the class I-like SAM-binding methyltransferase superfamily. TrmB family.

It catalyses the reaction guanosine(46) in tRNA + S-adenosyl-L-methionine = N(7)-methylguanosine(46) in tRNA + S-adenosyl-L-homocysteine. The protein operates within tRNA modification; N(7)-methylguanine-tRNA biosynthesis. Functionally, catalyzes the formation of N(7)-methylguanine at position 46 (m7G46) in tRNA. The protein is tRNA (guanine-N(7)-)-methyltransferase of Anaeromyxobacter dehalogenans (strain 2CP-C).